A 227-amino-acid polypeptide reads, in one-letter code: tRNA (guanine-N(1)-)-methyltransferase (227 aa).

S-adenosyl-L-methionine-binding positions include Gly-111 and Leu-135–Leu-140.

Belongs to the RNA methyltransferase TrmD family. As to quaternary structure, homodimer.

Its subcellular location is the cytoplasm. The enzyme catalyses guanosine(37) in tRNA + S-adenosyl-L-methionine = N(1)-methylguanosine(37) in tRNA + S-adenosyl-L-homocysteine + H(+). In terms of biological role, specifically methylates guanosine-37 in various tRNAs. The protein is tRNA (guanine-N(1)-)-methyltransferase of Leifsonia xyli subsp. xyli (strain CTCB07).